The primary structure comprises 137 residues: Acidic phospholipase A2 VP8 (137 aa).

The first 16 residues, 1-16 (MRILWIVAVCLIGVEG), serve as a signal peptide directing secretion. Disulfide bonds link C41–C130, C43–C59, C58–C110, C64–C137, C65–C103, C72–C96, and C90–C101. Ca(2+)-binding residues include Y42, G44, and G46. H62 is an active-site residue. D63 is a binding site for Ca(2+). D104 is an active-site residue.

This sequence belongs to the phospholipase A2 family. Group II subfamily. D49 sub-subfamily. In terms of assembly, does not form a complex. Requires Ca(2+) as cofactor. In terms of tissue distribution, expressed by the venom gland.

The protein localises to the secreted. It catalyses the reaction a 1,2-diacyl-sn-glycero-3-phosphocholine + H2O = a 1-acyl-sn-glycero-3-phosphocholine + a fatty acid + H(+). In terms of biological role, snake venom phospholipase A2 (PLA2) that is not toxic by itself, but the synergistical mixture of a basic and this acidic protein is lethal. PLA2 catalyzes the calcium-dependent hydrolysis of the 2-acyl groups in 3-sn-phosphoglycerides. The sequence is that of Acidic phospholipase A2 VP8 from Daboia palaestinae (Palestine viper).